Reading from the N-terminus, the 342-residue chain is MLSNPSQVVLRNIELFESKNVLLINHECDLLATALLEDAAKVTTLALDFNHFQRIKSHENARLQCHFGHQLPSTQTFDAVVLFYPKSKSLAPYLLNLAGRHLIPGGELVIVGEKKGGIRSITKQLPDYFDGGIKLDNARHCMLYSSSLLSEAPEIKLSDWVKDYVLSTPQGELTICNLVGVFSEKRLDEGTELLLEHLPTLKGRVLDFGCGAGVITAALLKANPDLELECVDINAMALASCELTLAANGMQAKVYASDGLTQTQGMFDAIISNPPFHDGLDSTTEIATRFVQESEAQLKSGGIFQIVANRHLPYSDTIAKFFKTVNVAAENNKYKIYANRKA.

This sequence belongs to the methyltransferase superfamily. RsmC family. In terms of assembly, monomer.

The protein localises to the cytoplasm. The enzyme catalyses guanosine(1207) in 16S rRNA + S-adenosyl-L-methionine = N(2)-methylguanosine(1207) in 16S rRNA + S-adenosyl-L-homocysteine + H(+). In terms of biological role, specifically methylates the guanine in position 1207 of 16S rRNA in the 30S particle. This is Ribosomal RNA small subunit methyltransferase C from Shewanella loihica (strain ATCC BAA-1088 / PV-4).